An 86-amino-acid polypeptide reads, in one-letter code: LIYAKVECLTTGVRTYVGKQSWPELVGTKGKTAAATIDKENTHVTAVLCPPLTTLAACRTFDFRCDRVRVLINRIGGVVTKTPTVG.

2 disulfide bridges follow: C8–C65 and C49–C58.

Its function is as follows. Serine protease inhibitor which is active against trypsin. Displays strong antifungal activity against a number of phytopathogenic fungi including M.melonis, A.cucumerina, A.solani, C.glaeosporioides and P.capsici. This Fagopyrum tataricum (Tartarian buckwheat) protein is Trypsin inhibitor.